A 399-amino-acid chain; its full sequence is MNIHEHQAKAVLAEFGAPVPRGYPAFTVEEAVAAAEKLGGPVFVVKSQIHAGGRGKGKFKGLGPDAKGGVRVVKSVEDVKTNAAEMLGRVLVTHQTGPKGKQVNRLYVEEGAAIAKEFYLSLLVDRETSMVSVVASTEGGMDIEDVAHATPEKIHSFSIDPATGVWPTHARALAKALGLTGGLAKEAATLLGQLYTAFLAKDMAMLEINPLIVTEDDHLKVLDAKLSFDGNALYRHPDIRALRDESEEDPKEIEASKYDLAYIALDGEIGCMVNGAGLAMATMDIIKLYGAEPANFLDVGGGASKEKVTAAFKIITADPAVKGILVNIFGGIMRCDIIAEGVIAAVKEVGLQVPLVVRLEGTNVELGKKIIRESGLNVIAANDLSDGAEKIVKAVKGAA.

The region spanning 9-254 is the ATP-grasp domain; that stretch reads KAVLAEFGAP…ESEEDPKEIE (246 aa). ATP is bound by residues lysine 46, 53–55, glutamate 109, alanine 112, and glutamate 117; that span reads GRG. Residues asparagine 209 and aspartate 223 each coordinate Mg(2+). Residues asparagine 274 and 331-333 each bind substrate; that span reads GIM.

This sequence belongs to the succinate/malate CoA ligase beta subunit family. Heterotetramer of two alpha and two beta subunits. Requires Mg(2+) as cofactor.

It catalyses the reaction succinate + ATP + CoA = succinyl-CoA + ADP + phosphate. The enzyme catalyses GTP + succinate + CoA = succinyl-CoA + GDP + phosphate. The protein operates within carbohydrate metabolism; tricarboxylic acid cycle; succinate from succinyl-CoA (ligase route): step 1/1. Its function is as follows. Succinyl-CoA synthetase functions in the citric acid cycle (TCA), coupling the hydrolysis of succinyl-CoA to the synthesis of either ATP or GTP and thus represents the only step of substrate-level phosphorylation in the TCA. The beta subunit provides nucleotide specificity of the enzyme and binds the substrate succinate, while the binding sites for coenzyme A and phosphate are found in the alpha subunit. In Caulobacter sp. (strain K31), this protein is Succinate--CoA ligase [ADP-forming] subunit beta.